The following is a 103-amino-acid chain: MMTYEIKTKISNSYERKCEKYRISHHVFDYQPDIKYMDGIRKIDPYLFLSDDSKKTLGKYHKPLDIIDAVEDYFEVFYDELCDSLNNNDNSENENSDKKLKKN.

This is an uncharacterized protein from Acanthamoeba polyphaga mimivirus (APMV).